Reading from the N-terminus, the 121-residue chain is Prefoldin subunit beta (121 aa).

This sequence belongs to the prefoldin subunit beta family. Heterohexamer of two alpha and four beta subunits.

The protein resides in the cytoplasm. Functionally, molecular chaperone capable of stabilizing a range of proteins. Seems to fulfill an ATP-independent, HSP70-like function in archaeal de novo protein folding. This chain is Prefoldin subunit beta (pfdB), found in Methanothermobacter thermautotrophicus (strain ATCC 29096 / DSM 1053 / JCM 10044 / NBRC 100330 / Delta H) (Methanobacterium thermoautotrophicum).